The following is a 109-amino-acid chain: MFGKGGLGNLMKQAQQMQEKMQKMQEEIALVEVTGESGAGLVKVTINGAHNCRRVEIDPSLMEDDKEMLEDLVAAAFNDAARRIESEQKERMASVSSGMQLPPGFKMPF.

Residues 89 to 109 (KERMASVSSGMQLPPGFKMPF) form a disordered region.

Belongs to the YbaB/EbfC family. Homodimer.

Its subcellular location is the cytoplasm. The protein resides in the nucleoid. Binds to DNA and alters its conformation. May be involved in regulation of gene expression, nucleoid organization and DNA protection. The sequence is that of Nucleoid-associated protein NT01EI_1109 from Edwardsiella ictaluri (strain 93-146).